We begin with the raw amino-acid sequence, 109 residues long: MHTNRPYRHPSLKRLRYRKRLPPNAALICLCLLPLLTGCVRTPIKYLPVPPAPIPATLLDDCAPPVISEHMTWGDSLVLNEQLLLALEMCNQDKAAIRRIEEQKNDSQK.

This chain is Putative protein p16 (16), found in Escherichia coli (Bacteriophage APSE-1).